The chain runs to 182 residues: ATP synthase subunit delta (182 aa).

This sequence belongs to the ATPase delta chain family. As to quaternary structure, F-type ATPases have 2 components, F(1) - the catalytic core - and F(0) - the membrane proton channel. F(1) has five subunits: alpha(3), beta(3), gamma(1), delta(1), epsilon(1). F(0) has three main subunits: a(1), b(2) and c(10-14). The alpha and beta chains form an alternating ring which encloses part of the gamma chain. F(1) is attached to F(0) by a central stalk formed by the gamma and epsilon chains, while a peripheral stalk is formed by the delta and b chains.

Its subcellular location is the cell inner membrane. Functionally, f(1)F(0) ATP synthase produces ATP from ADP in the presence of a proton or sodium gradient. F-type ATPases consist of two structural domains, F(1) containing the extramembraneous catalytic core and F(0) containing the membrane proton channel, linked together by a central stalk and a peripheral stalk. During catalysis, ATP synthesis in the catalytic domain of F(1) is coupled via a rotary mechanism of the central stalk subunits to proton translocation. Its function is as follows. This protein is part of the stalk that links CF(0) to CF(1). It either transmits conformational changes from CF(0) to CF(1) or is implicated in proton conduction. The chain is ATP synthase subunit delta from Persephonella marina (strain DSM 14350 / EX-H1).